The chain runs to 324 residues: DNA-directed RNA polymerase subunit alpha (324 aa).

The alpha N-terminal domain (alpha-NTD) stretch occupies residues M1–S228. Residues R245–K324 form an alpha C-terminal domain (alpha-CTD) region.

This sequence belongs to the RNA polymerase alpha chain family. As to quaternary structure, homodimer. The RNAP catalytic core consists of 2 alpha, 1 beta, 1 beta' and 1 omega subunit. When a sigma factor is associated with the core the holoenzyme is formed, which can initiate transcription.

The enzyme catalyses RNA(n) + a ribonucleoside 5'-triphosphate = RNA(n+1) + diphosphate. Functionally, DNA-dependent RNA polymerase catalyzes the transcription of DNA into RNA using the four ribonucleoside triphosphates as substrates. This is DNA-directed RNA polymerase subunit alpha from Caldicellulosiruptor bescii (strain ATCC BAA-1888 / DSM 6725 / KCTC 15123 / Z-1320) (Anaerocellum thermophilum).